A 115-amino-acid chain; its full sequence is Large ribosomal subunit protein uL22 (115 aa).

It belongs to the universal ribosomal protein uL22 family. In terms of assembly, part of the 50S ribosomal subunit.

This protein binds specifically to 23S rRNA; its binding is stimulated by other ribosomal proteins, e.g. L4, L17, and L20. It is important during the early stages of 50S assembly. It makes multiple contacts with different domains of the 23S rRNA in the assembled 50S subunit and ribosome. Its function is as follows. The globular domain of the protein is located near the polypeptide exit tunnel on the outside of the subunit, while an extended beta-hairpin is found that lines the wall of the exit tunnel in the center of the 70S ribosome. The chain is Large ribosomal subunit protein uL22 from Nitrosospira multiformis (strain ATCC 25196 / NCIMB 11849 / C 71).